A 566-amino-acid chain; its full sequence is NAD-dependent malic enzyme 3 (566 aa).

Y105 functions as the Proton donor in the catalytic mechanism. K178 (proton acceptor) is an active-site residue. A divalent metal cation is bound by residues E249, D250, and D273. Residues A306–A309, N423, and N468 contribute to the NAD(+) site.

The protein belongs to the malic enzymes family. Requires Mg(2+) as cofactor. Mn(2+) is required as a cofactor.

It catalyses the reaction (S)-malate + NAD(+) = pyruvate + CO2 + NADH. The enzyme catalyses oxaloacetate + H(+) = pyruvate + CO2. Catalyzes the decarboxylation of malate to pyruvate. Can use NAD and NADP, but with a strong preference for NAD. Can also catalyze the decarboxylation of oxaloacetate. Involved in keeping the ATP levels high. In Bacillus subtilis (strain 168), this protein is NAD-dependent malic enzyme 3 (malS).